The primary structure comprises 131 residues: D-ribose pyranase (131 aa).

His-20 functions as the Proton donor in the catalytic mechanism. Residues Asp-28, His-98, and 120 to 122 each bind substrate; that span reads YAN.

Belongs to the RbsD / FucU family. RbsD subfamily. Homodecamer.

Its subcellular location is the cytoplasm. It carries out the reaction beta-D-ribopyranose = beta-D-ribofuranose. It participates in carbohydrate metabolism; D-ribose degradation; D-ribose 5-phosphate from beta-D-ribopyranose: step 1/2. In terms of biological role, catalyzes the interconversion of beta-pyran and beta-furan forms of D-ribose. The chain is D-ribose pyranase from Bacillus velezensis (strain DSM 23117 / BGSC 10A6 / LMG 26770 / FZB42) (Bacillus amyloliquefaciens subsp. plantarum).